The sequence spans 454 residues: MSHNDTIVAQATPPGRGGVGILRISGLKARDVAQAVLGKLPKPRYADYLPFNDVDGTPLDQGIALWFPGPNSFTGEDVLELQGHGGPVILDLLLKRILTLPGVRIARPGEFSERAFLNDKLDLAQAEAIADLIDASSEQAARSALNSLQGAFSARVNHLVEALTHLRIYVEAAIDFPDEEIDFLSDGKIEAQLNGVMADLDAVRAEARQGSLLREGMKVVIAGRPNAGKSSLLNALAGREAAIVTDIAGTTRDVLREHIHIDGMPLHIIDTAGLRDASDEVERIGIERAWQEIEQADRVLFMVDGTTTSAVDPAEIWPDFIERLPAKLPITVVRNKADVTGEALGLSEVNGHSLIRLSARTGEGVEVLRNHLKQSMGFDTSMEGGFLARRRHLQALEEAANHLQQGKAQLLGAWAGELLAEELRLAQQALSEITGEFTSDDLLGRIFSSFCIGK.

(6S)-5-formyl-5,6,7,8-tetrahydrofolate contacts are provided by Arg23, Glu80, and Lys120. A TrmE-type G domain is found at 216 to 377 (GMKVVIAGRP…LRNHLKQSMG (162 aa)). Residue Asn226 coordinates K(+). GTP is bound by residues 226-231 (NAGKSS), 245-251 (TDIAGTT), 270-273 (DTAG), 335-338 (NKAD), and 358-360 (SAR). Position 230 (Ser230) interacts with Mg(2+). Residues Thr245, Ile247, and Thr250 each coordinate K(+). Residue Thr251 coordinates Mg(2+). Lys454 is a (6S)-5-formyl-5,6,7,8-tetrahydrofolate binding site.

Belongs to the TRAFAC class TrmE-Era-EngA-EngB-Septin-like GTPase superfamily. TrmE GTPase family. As to quaternary structure, homodimer. Heterotetramer of two MnmE and two MnmG subunits. It depends on K(+) as a cofactor.

The protein localises to the cytoplasm. In terms of biological role, exhibits a very high intrinsic GTPase hydrolysis rate. Involved in the addition of a carboxymethylaminomethyl (cmnm) group at the wobble position (U34) of certain tRNAs, forming tRNA-cmnm(5)s(2)U34. This is tRNA modification GTPase MnmE from Klebsiella pneumoniae (strain 342).